The chain runs to 942 residues: Homeobox protein 2 (942 aa).

Composition is skewed to low complexity over residues 32 to 87 and 98 to 130; these read ECNE…NINE and SPYS…SPIP. Disordered stretches follow at residues 32 to 149, 161 to 494, 537 to 580, and 609 to 942; these read ECNE…PQNI, LESP…RLKK, RQEK…QGGA, and FKNN…CQQN. Positions 131–149 are enriched in polar residues; sequence NTNFKQSGEYQSIPSPQNI. The segment covering 163 to 261 has biased composition (low complexity); sequence SPNSSNSSPS…PSSNLSKSNS (99 aa). Over residues 269–290 the composition is skewed to polar residues; that stretch reads QAPSNTSSPQLLSPNHNQQRIS. Composition is skewed to low complexity over residues 299–430 and 450–464; these read NNNH…NSSP and NNNN…SNSS. Positions 465 to 481 are enriched in polar residues; that stretch reads FDEYQPQQKVSRSNSPN. The homeobox DNA-binding region spans 485 to 544; the sequence is EKKRRTRLKKEQADILKTFFDNDDYPTKDDKETLANRLGMSYCAVTTWFSNKRQEKKRRG. 6 stretches are compositionally biased toward low complexity: residues 609–621, 628–685, 694–737, 752–764, 776–864, and 890–927; these read FKNN…NKNV, NNNN…GSSD, NNNN…NNNN, SDDT…YLNN, and NNFN…NDNN. Residues 835–865 are a coiled coil; the sequence is NNNNNNNNQNNNNNNNNNQYNNNNKNYLNNI.

The protein localises to the nucleus. In terms of biological role, putative transcription factor that may potentiate the function of warA. This is Homeobox protein 2 (hbx2) from Dictyostelium discoideum (Social amoeba).